Reading from the N-terminus, the 448-residue chain is Exodeoxyribonuclease 7 large subunit (448 aa).

Belongs to the XseA family. In terms of assembly, heterooligomer composed of large and small subunits.

Its subcellular location is the cytoplasm. The enzyme catalyses Exonucleolytic cleavage in either 5'- to 3'- or 3'- to 5'-direction to yield nucleoside 5'-phosphates.. Bidirectionally degrades single-stranded DNA into large acid-insoluble oligonucleotides, which are then degraded further into small acid-soluble oligonucleotides. In Hamiltonella defensa subsp. Acyrthosiphon pisum (strain 5AT), this protein is Exodeoxyribonuclease 7 large subunit.